Here is a 469-residue protein sequence, read N- to C-terminus: Hydrogen cyanide synthase subunit HcnB (469 aa).

In terms of assembly, heterotrimer of HcnA, HcnB and HcnC.

It is found in the cell membrane. The enzyme catalyses glycine + 2 A = hydrogen cyanide + 2 AH2 + CO2. A three-component membrane-bound flavoenzyme that catalyzes the formation of hydrogen cyanide, a secondary metabolite, by transfer of electrons to a cyanide-resistant branch of the aerobic respiratory chain. Contributes to suppression of black root rot of tobacco. The sequence is that of Hydrogen cyanide synthase subunit HcnB from Pseudomonas protegens (strain DSM 19095 / LMG 27888 / CFBP 6595 / CHA0).